Here is a 254-residue protein sequence, read N- to C-terminus: tRNA (guanine-N(1)-)-methyltransferase (254 aa).

S-adenosyl-L-methionine is bound by residues glycine 114 and 134-139 (IGDYVL).

This sequence belongs to the RNA methyltransferase TrmD family. As to quaternary structure, homodimer.

It is found in the cytoplasm. It catalyses the reaction guanosine(37) in tRNA + S-adenosyl-L-methionine = N(1)-methylguanosine(37) in tRNA + S-adenosyl-L-homocysteine + H(+). Specifically methylates guanosine-37 in various tRNAs. In Desulforamulus reducens (strain ATCC BAA-1160 / DSM 100696 / MI-1) (Desulfotomaculum reducens), this protein is tRNA (guanine-N(1)-)-methyltransferase.